Reading from the N-terminus, the 177-residue chain is Large ribosomal subunit protein uL6 (177 aa).

Belongs to the universal ribosomal protein uL6 family. Part of the 50S ribosomal subunit.

Functionally, this protein binds to the 23S rRNA, and is important in its secondary structure. It is located near the subunit interface in the base of the L7/L12 stalk, and near the tRNA binding site of the peptidyltransferase center. This is Large ribosomal subunit protein uL6 from Xanthobacter autotrophicus (strain ATCC BAA-1158 / Py2).